We begin with the raw amino-acid sequence, 351 residues long: Protein arginine N-methyltransferase 1-B (351 aa).

In terms of domain architecture, SAM-dependent MTase PRMT-type spans 30-331; sequence KDYYFDSYAH…KNNRDLDFTV (302 aa). 5 residues coordinate S-adenosyl-L-methionine: histidine 43, arginine 52, glycine 76, glutamate 98, and glutamate 127. Catalysis depends on residues glutamate 142 and glutamate 151.

This sequence belongs to the class I-like SAM-binding methyltransferase superfamily. Protein arginine N-methyltransferase family. As to quaternary structure, homodimer. Homooctamer; individual homodimers associates to form a homooctamer and homooligomerization is required for proper localization to the cell membrane. Individual homodimers can associate to form a homohexamer. Component of a complex with lsm14a/rap55a. Interacts with cirbp. In terms of tissue distribution, from the onset of gastrulation, expressed in dorsal mesoderm, and in dorsal and ventral ectoderm. At the neurula and tail bud stages, expression is restricted to the neuroectoderm, with highest expression in the anterior neural plate.

Its subcellular location is the nucleus. It localises to the nucleoplasm. The protein localises to the cytoplasm. The protein resides in the cytosol. The catalysed reaction is L-arginyl-[protein] + 2 S-adenosyl-L-methionine = N(omega),N(omega)-dimethyl-L-arginyl-[protein] + 2 S-adenosyl-L-homocysteine + 2 H(+). It carries out the reaction L-arginyl-[protein] + S-adenosyl-L-methionine = N(omega)-methyl-L-arginyl-[protein] + S-adenosyl-L-homocysteine + H(+). It catalyses the reaction N(omega)-methyl-L-arginyl-[protein] + S-adenosyl-L-methionine = N(omega),N(omega)-dimethyl-L-arginyl-[protein] + S-adenosyl-L-homocysteine + H(+). Arginine methyltransferase that methylates (mono and asymmetric dimethylation) the guanidino nitrogens of arginyl residues present in target proteins. Constitutes the main enzyme that mediates monomethylation and asymmetric dimethylation of histone H4 'Arg-4' (H4R3me1 and H4R3me2a, respectively), a specific tag for epigenetic transcriptional activation. Methylates ilf3 to regulate its DNA-binding activity. Required for neural induction, playing a key role in the control of epidermal versus neural cell fate choice. The protein is Protein arginine N-methyltransferase 1-B (prmt1-b) of Xenopus laevis (African clawed frog).